We begin with the raw amino-acid sequence, 156 residues long: Small ribosomal subunit protein uS7 (156 aa).

Belongs to the universal ribosomal protein uS7 family. Part of the 30S ribosomal subunit. Contacts proteins S9 and S11.

In terms of biological role, one of the primary rRNA binding proteins, it binds directly to 16S rRNA where it nucleates assembly of the head domain of the 30S subunit. Is located at the subunit interface close to the decoding center, probably blocks exit of the E-site tRNA. The protein is Small ribosomal subunit protein uS7 of Mycoplasma mobile (strain ATCC 43663 / 163K / NCTC 11711) (Mesomycoplasma mobile).